The following is a 372-amino-acid chain: Glutamate 5-kinase (372 aa).

Residue K14 coordinates ATP. S54, D141, and N153 together coordinate substrate. 173–174 (TD) contacts ATP. In terms of domain architecture, PUA spans 280 to 358 (RGHVVIDAGA…GEIETVLGYM (79 aa)).

It belongs to the glutamate 5-kinase family.

The protein resides in the cytoplasm. It catalyses the reaction L-glutamate + ATP = L-glutamyl 5-phosphate + ADP. Its pathway is amino-acid biosynthesis; L-proline biosynthesis; L-glutamate 5-semialdehyde from L-glutamate: step 1/2. Functionally, catalyzes the transfer of a phosphate group to glutamate to form L-glutamate 5-phosphate. This chain is Glutamate 5-kinase, found in Burkholderia mallei (strain NCTC 10229).